A 1165-amino-acid chain; its full sequence is DNA-directed RNA polymerase subunit beta' (1165 aa).

The Zn(2+) site is built by Cys60, Cys62, Cys75, and Cys78. Mg(2+) contacts are provided by Asp449, Asp451, and Asp453. The Zn(2+) site is built by Cys794, Cys868, Cys875, and Cys878.

It belongs to the RNA polymerase beta' chain family. The RNAP catalytic core consists of 2 alpha, 1 beta, 1 beta' and 1 omega subunit. When a sigma factor is associated with the core the holoenzyme is formed, which can initiate transcription. Mg(2+) serves as cofactor. The cofactor is Zn(2+).

It carries out the reaction RNA(n) + a ribonucleoside 5'-triphosphate = RNA(n+1) + diphosphate. DNA-dependent RNA polymerase catalyzes the transcription of DNA into RNA using the four ribonucleoside triphosphates as substrates. The sequence is that of DNA-directed RNA polymerase subunit beta' from Acetivibrio thermocellus (strain ATCC 27405 / DSM 1237 / JCM 9322 / NBRC 103400 / NCIMB 10682 / NRRL B-4536 / VPI 7372) (Clostridium thermocellum).